Reading from the N-terminus, the 257-residue chain is Type III pantothenate kinase (257 aa).

6 to 13 (DCGNTNTV) is a binding site for ATP. Position 107-110 (107-110 (GPDR)) interacts with substrate. The active-site Proton acceptor is Asp-109. K(+) is bound at residue Asp-129. Thr-132 contacts ATP. Thr-184 contributes to the substrate binding site.

Belongs to the type III pantothenate kinase family. In terms of assembly, homodimer. NH4(+) serves as cofactor. The cofactor is K(+).

It localises to the cytoplasm. The enzyme catalyses (R)-pantothenate + ATP = (R)-4'-phosphopantothenate + ADP + H(+). It participates in cofactor biosynthesis; coenzyme A biosynthesis; CoA from (R)-pantothenate: step 1/5. Catalyzes the phosphorylation of pantothenate (Pan), the first step in CoA biosynthesis. In Cereibacter sphaeroides (strain ATCC 17029 / ATH 2.4.9) (Rhodobacter sphaeroides), this protein is Type III pantothenate kinase.